The primary structure comprises 220 residues: Recombination protein RecR (220 aa).

Residues 57–72 form a C4-type zinc finger; the sequence is CPICFNITDAEKCDVC. The region spanning 80–173 is the Toprim domain; it reads RTICVVEEPG…AISRIAYGVP (94 aa). Residues 190 to 220 form a disordered region; it reads LTGRQTVSKPQPPQRPGDEDGADGAAVPASR.

The protein belongs to the RecR family.

May play a role in DNA repair. It seems to be involved in an RecBC-independent recombinational process of DNA repair. It may act with RecF and RecO. The polypeptide is Recombination protein RecR (Deinococcus radiodurans (strain ATCC 13939 / DSM 20539 / JCM 16871 / CCUG 27074 / LMG 4051 / NBRC 15346 / NCIMB 9279 / VKM B-1422 / R1)).